Here is a 396-residue protein sequence, read N- to C-terminus: 1-deoxy-D-xylulose 5-phosphate reductoisomerase (396 aa).

NADPH-binding residues include threonine 15, glycine 16, serine 17, isoleucine 18, glycine 41, and asparagine 129. Lysine 130 lines the 1-deoxy-D-xylulose 5-phosphate pocket. Glutamate 131 serves as a coordination point for NADPH. Aspartate 155 is a binding site for Mn(2+). The 1-deoxy-D-xylulose 5-phosphate site is built by serine 156, glutamate 157, serine 182, and histidine 205. Glutamate 157 serves as a coordination point for Mn(2+). Glycine 211 contacts NADPH. 4 residues coordinate 1-deoxy-D-xylulose 5-phosphate: serine 218, asparagine 223, lysine 224, and glutamate 227. Residue glutamate 227 participates in Mn(2+) binding.

It belongs to the DXR family. It depends on Mg(2+) as a cofactor. Requires Mn(2+) as cofactor.

The enzyme catalyses 2-C-methyl-D-erythritol 4-phosphate + NADP(+) = 1-deoxy-D-xylulose 5-phosphate + NADPH + H(+). It participates in isoprenoid biosynthesis; isopentenyl diphosphate biosynthesis via DXP pathway; isopentenyl diphosphate from 1-deoxy-D-xylulose 5-phosphate: step 1/6. Functionally, catalyzes the NADPH-dependent rearrangement and reduction of 1-deoxy-D-xylulose-5-phosphate (DXP) to 2-C-methyl-D-erythritol 4-phosphate (MEP). This chain is 1-deoxy-D-xylulose 5-phosphate reductoisomerase, found in Xanthomonas euvesicatoria pv. vesicatoria (strain 85-10) (Xanthomonas campestris pv. vesicatoria).